Here is a 1494-residue protein sequence, read N- to C-terminus: Ral GTPase-activating protein subunit beta (1494 aa).

Disordered regions lie at residues 355–437 (PRSD…APRR) and 709–738 (ENNLKSHSRTNSGISSASGGSTEPTTPDSE). At S359 the chain carries Phosphoserine. Phosphothreonine is present on residues T363 and T379. Polar residues-rich tracts occupy residues 369-381 (SMPQSAAVSTTPP), 392-428 (NKATMKTSTVSTAHASKVQHQTSSTSPLSSPNQTSSE), and 711-735 (NLKSHSRTNSGISSASGGSTEPTTP). Phosphoserine is present on residues S421 and S720. Residue T734 is modified to Phosphothreonine. Positions 1149–1392 (IGYLDLLPCR…TTLEKEVPVI (244 aa)) constitute a Rap-GAP domain. A Phosphoserine modification is found at S1285. Positions 1312–1323 (NLNSSQRLSPSS) are enriched in polar residues. A disordered region spans residues 1312 to 1335 (NLNSSQRLSPSSRMRKLPQGRPVP).

As to quaternary structure, component of the heterodimeric RalGAP1 complex with RALGAPA1 and of the heterodimeric RalGAP2 complex with RALGAPA2. Heterodimerization is required for activity. In terms of tissue distribution, highly expressed in brain, mostly in amygdala.

Non-catalytic subunit of the heterodimeric RalGAP1 and RalGAP2 complexes which act as GTPase activators for the Ras-like small GTPases RALA and RALB. The sequence is that of Ral GTPase-activating protein subunit beta (RALGAPB) from Homo sapiens (Human).